A 330-amino-acid chain; its full sequence is MKIVVLGAGAWGTALAMSAAAHAACHEVTLWARDAQQAQAMQAKRQNQRYLPGLAFPPGLHVASGDMGALAADADLVVVGTPMAALRGMLERLDGCAAPIAWLCKGFEADTGLMAHEVCAQVAPRLHSGVFSGPSFAQEVATAQPTAMVAASPRATVRDALVQAFHGPALRVYASEDIVGVEVGGAVKNVLAIATGLCDGLQLGMNARAALITRGLAEMTRLGLALGARPETFMGLSGLGDLVLTATGDLSRNRRVGLLLAEGRTLAQAVESLGHVAEGVYSARTVVQRARAVGVEMPIAECVVALLDGELRAAEAVARLMEREPTVERH.

NADPH-binding residues include Trp11, Arg33, and Lys105. Residues Lys105, Gly133, and Ser135 each coordinate sn-glycerol 3-phosphate. Residue Ala137 coordinates NADPH. Residues Lys188, Asp241, Ser251, Arg252, and Asn253 each coordinate sn-glycerol 3-phosphate. Lys188 serves as the catalytic Proton acceptor. Arg252 provides a ligand contact to NADPH. Residues Val276 and Glu278 each coordinate NADPH.

This sequence belongs to the NAD-dependent glycerol-3-phosphate dehydrogenase family.

It localises to the cytoplasm. It carries out the reaction sn-glycerol 3-phosphate + NAD(+) = dihydroxyacetone phosphate + NADH + H(+). It catalyses the reaction sn-glycerol 3-phosphate + NADP(+) = dihydroxyacetone phosphate + NADPH + H(+). It functions in the pathway membrane lipid metabolism; glycerophospholipid metabolism. Functionally, catalyzes the reduction of the glycolytic intermediate dihydroxyacetone phosphate (DHAP) to sn-glycerol 3-phosphate (G3P), the key precursor for phospholipid synthesis. In Acidovorax sp. (strain JS42), this protein is Glycerol-3-phosphate dehydrogenase [NAD(P)+].